Here is a 162-residue protein sequence, read N- to C-terminus: MTSIPISVQGYKALEEELARLKSERPEIIQAIKEAREEGDLRENAGYDAARERQGMAEARIKYIESRMALYQVIDLDTLSGDKVIFGATVDLEDVDSGEAKTYTILGPDEADPSKGSISFLSPVGQALLGREEGDEVSVEIPRGRVTYEIIGVSFKGSKNLG.

A coiled-coil region spans residues 9-38 (QGYKALEEELARLKSERPEIIQAIKEAREE).

It belongs to the GreA/GreB family.

Its function is as follows. Necessary for efficient RNA polymerase transcription elongation past template-encoded arresting sites. The arresting sites in DNA have the property of trapping a certain fraction of elongating RNA polymerases that pass through, resulting in locked ternary complexes. Cleavage of the nascent transcript by cleavage factors such as GreA or GreB allows the resumption of elongation from the new 3'terminus. GreA releases sequences of 2 to 3 nucleotides. The sequence is that of Transcription elongation factor GreA from Desulfovibrio desulfuricans (strain ATCC 27774 / DSM 6949 / MB).